Reading from the N-terminus, the 133-residue chain is Ribosome-binding factor A (133 aa).

The protein belongs to the RbfA family. As to quaternary structure, monomer. Binds 30S ribosomal subunits, but not 50S ribosomal subunits or 70S ribosomes.

It localises to the cytoplasm. Functionally, one of several proteins that assist in the late maturation steps of the functional core of the 30S ribosomal subunit. Associates with free 30S ribosomal subunits (but not with 30S subunits that are part of 70S ribosomes or polysomes). Required for efficient processing of 16S rRNA. May interact with the 5'-terminal helix region of 16S rRNA. This Shigella boydii serotype 18 (strain CDC 3083-94 / BS512) protein is Ribosome-binding factor A.